The chain runs to 108 residues: U-scoloptoxin(16)-Er10a (108 aa).

The signal sequence occupies residues 1-24 (MASFTSFCVLFTFCLLLLAHQARS).

It belongs to the scoloptoxin-16 family. Post-translationally, contains 4 disulfide bonds. Expressed by the venom gland.

Its subcellular location is the secreted. This is U-scoloptoxin(16)-Er10a from Ethmostigmus rubripes (Giant centipede).